The primary structure comprises 138 residues: Putative nickel-responsive regulator (138 aa).

Residues His78, His89, His91, and Cys97 each contribute to the Ni(2+) site.

Belongs to the transcriptional regulatory CopG/NikR family. The cofactor is Ni(2+).

In terms of biological role, transcriptional regulator. This chain is Putative nickel-responsive regulator, found in Thermococcus onnurineus (strain NA1).